A 379-amino-acid polypeptide reads, in one-letter code: Chaperone protein DnaJ (379 aa).

The J domain maps to 5–69 (EFYDRLGVSK…QKRAAYDQYG (65 aa)). The CR-type zinc-finger motif lies at 135–217 (GAEKEVSYNR…CHGTGHEKKT (83 aa)). The Zn(2+) site is built by C148, C151, C165, C168, C191, C194, C205, and C208. 4 CXXCXGXG motif repeats span residues 148 to 155 (CHTCSGSG), 165 to 172 (CQKCHGSG), 191 to 198 (CDVCQGSG), and 205 to 212 (CPTCHGTG).

The protein belongs to the DnaJ family. As to quaternary structure, homodimer. It depends on Zn(2+) as a cofactor.

It is found in the cytoplasm. Participates actively in the response to hyperosmotic and heat shock by preventing the aggregation of stress-denatured proteins and by disaggregating proteins, also in an autonomous, DnaK-independent fashion. Unfolded proteins bind initially to DnaJ; upon interaction with the DnaJ-bound protein, DnaK hydrolyzes its bound ATP, resulting in the formation of a stable complex. GrpE releases ADP from DnaK; ATP binding to DnaK triggers the release of the substrate protein, thus completing the reaction cycle. Several rounds of ATP-dependent interactions between DnaJ, DnaK and GrpE are required for fully efficient folding. Also involved, together with DnaK and GrpE, in the DNA replication of plasmids through activation of initiation proteins. The polypeptide is Chaperone protein DnaJ (Streptococcus agalactiae serotype V (strain ATCC BAA-611 / 2603 V/R)).